The sequence spans 114 residues: Ribosome-binding factor A (114 aa).

This sequence belongs to the RbfA family. Monomer. Binds 30S ribosomal subunits, but not 50S ribosomal subunits or 70S ribosomes.

The protein localises to the cytoplasm. Its function is as follows. One of several proteins that assist in the late maturation steps of the functional core of the 30S ribosomal subunit. Associates with free 30S ribosomal subunits (but not with 30S subunits that are part of 70S ribosomes or polysomes). Required for efficient processing of 16S rRNA. May interact with the 5'-terminal helix region of 16S rRNA. This chain is Ribosome-binding factor A, found in Listeria innocua serovar 6a (strain ATCC BAA-680 / CLIP 11262).